We begin with the raw amino-acid sequence, 414 residues long: Glucose-1-phosphate adenylyltransferase (414 aa).

Residues Tyr103, Gly168, 183–184 (EK), and Ser201 each bind alpha-D-glucose 1-phosphate.

It belongs to the bacterial/plant glucose-1-phosphate adenylyltransferase family. As to quaternary structure, homotetramer.

It catalyses the reaction alpha-D-glucose 1-phosphate + ATP + H(+) = ADP-alpha-D-glucose + diphosphate. It functions in the pathway glycan biosynthesis; glycogen biosynthesis. In terms of biological role, involved in the biosynthesis of ADP-glucose, a building block required for the elongation reactions to produce glycogen. Catalyzes the reaction between ATP and alpha-D-glucose 1-phosphate (G1P) to produce pyrophosphate and ADP-Glc. The protein is Glucose-1-phosphate adenylyltransferase of Thermus caldophilus.